The primary structure comprises 664 residues: MRSKYFCSLALVLGLFFVSCDGFASNEVQALRRFKEAIYEDPLLVMSNWNDPNSDPCDWTGIYCSPSKDHVIKINISASSIKGFLAPELGQITYLQELILHGNILIGTIPKEIGNLKNLKILDLGNNHLMGPIPAEIGSLSGIMIINLQSNGLTGKLPAELGNLKYLRELHIDRNRLQGSLLVAGASGYQSKVYSSNSSANIAGLCKSLKVADFSYNFFVGNIPKCLENLPRTSFQGNCMQNKDLKHRSSSQCANAQLVKTHGSPSAAPKHQSAQMVAKHHRASKPKWLLALEIVTGSMVGLLLLVALFSAVHRWNNRSTLIIPWKKSSSEKEKFTVYVDSEMLKDVSRLTRQELEVACEDFSNIIGLSADSQIYKGTLKGGSEIAVISLCVKEEDWTGYLELYFQREVADLARLNHENTAKLLGYCKEISPFTRMLVFEYASNGTLYEHLHYGEAALVSWARRMKIVIGIARGLKYLHMELDPPFTISELSSNAIYLTEDFTPKLVDFECWKTILARSEKNLRNISSQGSICVLPNGMESRYLDVSGNIYAFGILLLEIVSGRPPYCKDKGFLIEWAKEFLEAPEAMSGLVDPELKHFNQEDLETVCEVASQCLNRDPTNNNNNHNKPSVQELCETLESRISLSISAELRSSSLAWAELALDS.

An N-terminal signal peptide occupies residues 1-22 (MRSKYFCSLALVLGLFFVSCDG). Topologically, residues 23 to 288 (FASNEVQALR…KHHRASKPKW (266 aa)) are extracellular. The N-linked (GlcNAc...) asparagine glycan is linked to Asn-75. 4 LRR repeats span residues 94-116 (YLQELILHGNILIGTIPKEIGNL), 118-140 (NLKILDLGNNHLMGPIPAEIGSL), 142-165 (GIMIINLQSNGLTGKLPAELGNLK), and 166-178 (YLRELHIDRNRLQ). The N-linked (GlcNAc...) asparagine glycan is linked to Asn-197. The chain crosses the membrane as a helical span at residues 289-309 (LLALEIVTGSMVGLLLLVALF). At 310–664 (SAVHRWNNRS…LAWAELALDS (355 aa)) the chain is on the cytoplasmic side. Positions 360–642 (EDFSNIIGLS…ELCETLESRI (283 aa)) constitute a Protein kinase domain.

This sequence belongs to the protein kinase superfamily. Ser/Thr protein kinase family.

It is found in the cell membrane. It carries out the reaction L-seryl-[protein] + ATP = O-phospho-L-seryl-[protein] + ADP + H(+). It catalyses the reaction L-threonyl-[protein] + ATP = O-phospho-L-threonyl-[protein] + ADP + H(+). This Arabidopsis thaliana (Mouse-ear cress) protein is Probable LRR receptor-like serine/threonine-protein kinase At1g63430.